An 84-amino-acid polypeptide reads, in one-letter code: Beta-cardiotoxin CTX15 (84 aa).

The signal sequence occupies residues 1-21 (MKTLLLTLVVVTIVCLDLGYT). Cystine bridges form between cysteine 24–cysteine 43, cysteine 36–cysteine 61, cysteine 65–cysteine 76, and cysteine 77–cysteine 82.

It belongs to the three-finger toxin family. Short-chain subfamily. Aminergic toxin sub-subfamily. In terms of tissue distribution, expressed by the venom gland.

Its subcellular location is the secreted. In terms of biological role, acts as a beta-blocker by binding to beta-1 and beta-2 adrenergic receptors (ADRB1 and ADRB2). It dose-dependently decreases the heart rate (bradycardia), whereas conventional cardiotoxins increases it. At 100 mg/kg, intraperitoneal injection into mice provokes labored breathing, impaired locomotion, lack of response to external stimuli, and death (after 30 minutes). The protein is Beta-cardiotoxin CTX15 of Ophiophagus hannah (King cobra).